Reading from the N-terminus, the 493-residue chain is Cytochrome P450 monooxygenase astA (493 aa).

The chain crosses the membrane as a helical span at residues glutamate 5 to tyrosine 25. Asparagine 174 and asparagine 286 each carry an N-linked (GlcNAc...) asparagine glycan. Cysteine 433 lines the heme pocket.

It belongs to the cytochrome P450 family. Heme is required as a cofactor.

It localises to the membrane. The catalysed reaction is asperterpenoid A + reduced [NADPH--hemoprotein reductase] + O2 = asperterpenoid C + oxidized [NADPH--hemoprotein reductase] + H2O + H(+). It functions in the pathway secondary metabolite biosynthesis; terpenoid biosynthesis. Its function is as follows. Cytochrome P450 monooxygenase; part of the gene cluster that mediates the biosynthesis of the asperterpenoids, sesterterpenes that exhibit anti-tuberculosis activity. The first step of the pathway is performed by the sesterterpene synthase astC that possesses both prenyl transferase and terpene cyclase activity, converting isopentenyl diphosphate and dimethylallyl diphosphate into geranylfarnesyl diphosphate (GFPP) and further converting GFPP into preasperterpenoid A, respectively. The cytochrome P450 monooxygenase astB then dually oxidizes preasperterpenoid A to produce asperterpenoid A along with a minor product, asperterpenoid B. Finally, the cytochrome P450 monooxygenase astA converts asperterpenoid A into asperterpenoid C. The protein is Cytochrome P450 monooxygenase astA of Talaromyces wortmannii (Penicillium wortmannii).